The following is a 299-amino-acid chain: uncharacterized protein (299 aa).

A disordered region spans residues 1 to 44 (MSDSNLTNPIKAFFHDEFPEQYQEPPGLQKNMKPVPDCGEKSYK). NADP(+) is bound at residue 55–79 (LVTGGDSGIGRAAAIAYAREGADVA). Ser188 provides a ligand contact to substrate. Catalysis depends on Tyr201, which acts as the Proton acceptor.

This sequence belongs to the short-chain dehydrogenases/reductases (SDR) family.

This is an uncharacterized protein from Bacillus subtilis (strain 168).